We begin with the raw amino-acid sequence, 491 residues long: (S)-canadine synthase (491 aa).

A helical transmembrane segment spans residues 6-26 (LLVCATVAIVFATTTIIRILF). Cys-434 lines the heme pocket.

It belongs to the cytochrome P450 family. Heme is required as a cofactor. As to expression, expressed at low levels in roots.

It localises to the endoplasmic reticulum membrane. Its subcellular location is the microsome membrane. It carries out the reaction (S)-tetrahydrocolumbamine + reduced [NADPH--hemoprotein reductase] + O2 = (S)-canadine + oxidized [NADPH--hemoprotein reductase] + 2 H2O + H(+). Its function is as follows. Involved in the last but one step of the biosynthesis of berberine, an antimicrobial benzylisoquinoline alkaloid. Converts (S)-tetrahydrocolumbamine (THC) to (S)-tetrahydroberberine (THB) also called (S)-canadine. This chain is (S)-canadine synthase (CYP719A1), found in Coptis japonica (Japanese goldthread).